The primary structure comprises 378 residues: Probable pectin lyase A (378 aa).

The first 18 residues, 1–18, serve as a signal peptide directing secretion; sequence MKYASFLALVGFITSTSA. 2 cysteine pairs are disulfide-bonded: Cys81/Cys100 and Cys90/Cys224. Arg254 is a catalytic residue. Cysteines 321 and 329 form a disulfide.

It belongs to the polysaccharide lyase 1 family.

The protein localises to the secreted. It carries out the reaction Eliminative cleavage of (1-&gt;4)-alpha-D-galacturonan methyl ester to give oligosaccharides with 4-deoxy-6-O-methyl-alpha-D-galact-4-enuronosyl groups at their non-reducing ends.. Its function is as follows. Pectinolytic enzymes consist of four classes of enzymes: pectin lyase, polygalacturonase, pectin methylesterase and rhamnogalacturonase. Among pectinolytic enzymes, pectin lyase is the most important in depolymerization of pectin, since it cleaves internal glycosidic bonds of highly methylated pectins. This chain is Probable pectin lyase A (pelA), found in Aspergillus clavatus (strain ATCC 1007 / CBS 513.65 / DSM 816 / NCTC 3887 / NRRL 1 / QM 1276 / 107).